We begin with the raw amino-acid sequence, 146 residues long: Cyanate hydratase (146 aa).

Residues R87, E90, and S113 contribute to the active site.

Belongs to the cyanase family.

The enzyme catalyses cyanate + hydrogencarbonate + 3 H(+) = NH4(+) + 2 CO2. Its function is as follows. Catalyzes the reaction of cyanate with bicarbonate to produce ammonia and carbon dioxide. In Synechococcus elongatus (strain ATCC 33912 / PCC 7942 / FACHB-805) (Anacystis nidulans R2), this protein is Cyanate hydratase.